The primary structure comprises 540 residues: CTP synthase (540 aa).

The segment at 1–265 (MVRFIFITGG…DNKVLKFFNL (265 aa)) is amidoligase domain. Residue serine 13 coordinates CTP. Serine 13 lines the UTP pocket. ATP contacts are provided by residues 14–19 (SLGKGL) and aspartate 71. Positions 71 and 139 each coordinate Mg(2+). Residues 146–148 (DIE), 186–191 (KTKPTQ), and lysine 222 each bind CTP. Residues 186-191 (KTKPTQ) and lysine 222 contribute to the UTP site. The 250-residue stretch at 290–539 (RIAIIAKYHK…VEAAIKYNKN (250 aa)) folds into the Glutamine amidotransferase type-1 domain. Glycine 352 contacts L-glutamine. The Nucleophile; for glutamine hydrolysis role is filled by cysteine 379. Residues 380 to 383 (LGMQ), glutamate 403, and arginine 467 contribute to the L-glutamine site. Active-site residues include histidine 512 and glutamate 514.

The protein belongs to the CTP synthase family. In terms of assembly, homotetramer.

It catalyses the reaction UTP + L-glutamine + ATP + H2O = CTP + L-glutamate + ADP + phosphate + 2 H(+). It carries out the reaction L-glutamine + H2O = L-glutamate + NH4(+). The catalysed reaction is UTP + NH4(+) + ATP = CTP + ADP + phosphate + 2 H(+). It functions in the pathway pyrimidine metabolism; CTP biosynthesis via de novo pathway; CTP from UDP: step 2/2. Allosterically activated by GTP, when glutamine is the substrate; GTP has no effect on the reaction when ammonia is the substrate. The allosteric effector GTP functions by stabilizing the protein conformation that binds the tetrahedral intermediate(s) formed during glutamine hydrolysis. Inhibited by the product CTP, via allosteric rather than competitive inhibition. Its function is as follows. Catalyzes the ATP-dependent amination of UTP to CTP with either L-glutamine or ammonia as the source of nitrogen. Regulates intracellular CTP levels through interactions with the four ribonucleotide triphosphates. This chain is CTP synthase, found in Rickettsia bellii (strain RML369-C).